We begin with the raw amino-acid sequence, 334 residues long: Putative B3 domain-containing protein At3g49610 (334 aa).

2 disordered regions span residues 69–89 and 133–178; these read ERRT…GSEK and DEFE…KFDP. Composition is skewed to polar residues over residues 73–84 and 141–157; these read LGSSPTKTNTLF and KSPT…SCLM. A compositionally biased stretch (basic residues) spans 161-173; that stretch reads KRKRYQSSGKSKK. Residues 229-334 constitute a DNA-binding region (TF-B3); sequence FNKLLRNDFL…GVLCFALEKE (106 aa).

It is found in the nucleus. The chain is Putative B3 domain-containing protein At3g49610 from Arabidopsis thaliana (Mouse-ear cress).